A 232-amino-acid polypeptide reads, in one-letter code: Ubiquinone biosynthesis O-methyltransferase (232 aa).

Positions 36, 55, 76, and 120 each coordinate S-adenosyl-L-methionine.

This sequence belongs to the methyltransferase superfamily. UbiG/COQ3 family.

It carries out the reaction a 3-demethylubiquinol + S-adenosyl-L-methionine = a ubiquinol + S-adenosyl-L-homocysteine + H(+). It catalyses the reaction a 3-(all-trans-polyprenyl)benzene-1,2-diol + S-adenosyl-L-methionine = a 2-methoxy-6-(all-trans-polyprenyl)phenol + S-adenosyl-L-homocysteine + H(+). Its pathway is cofactor biosynthesis; ubiquinone biosynthesis. In terms of biological role, O-methyltransferase that catalyzes the 2 O-methylation steps in the ubiquinone biosynthetic pathway. This is Ubiquinone biosynthesis O-methyltransferase from Chromobacterium violaceum (strain ATCC 12472 / DSM 30191 / JCM 1249 / CCUG 213 / NBRC 12614 / NCIMB 9131 / NCTC 9757 / MK).